A 662-amino-acid chain; its full sequence is Polyunsaturated fatty acid lipoxygenase ALOX15 (662 aa).

A PLAT domain is found at 2-114; the sequence is GLYRIRVSTG…VLSLPEGTGR (113 aa). Residues 115-662 form the Lipoxygenase domain; that stretch reads TVGEDPQGLF…PSVVENSVAI (548 aa). The Fe cation site is built by His-360, His-365, His-540, His-544, and Ile-662.

The protein belongs to the lipoxygenase family. As to quaternary structure, interacts with PEBP1; in response to IL13/interleukin-13, prevents the interaction of PEBP1 with RAF1 to activate the ERK signaling cascade. Fe cation is required as a cofactor. Detected in monocytes and eosinophils (at protein level). Expressed in airway epithelial cells.

The protein localises to the cytoplasm. The protein resides in the cytosol. It localises to the cell membrane. Its subcellular location is the lipid droplet. The enzyme catalyses (5Z,8Z,11Z,14Z)-eicosatetraenoate + O2 = (12S)-hydroperoxy-(5Z,8Z,10E,14Z)-eicosatetraenoate. It catalyses the reaction (5Z,8Z,11Z,14Z)-eicosatetraenoate + O2 = (15S)-hydroperoxy-(5Z,8Z,11Z,13E)-eicosatetraenoate. The catalysed reaction is (9Z,12Z)-octadecadienoate + O2 = (13S)-hydroperoxy-(9Z,11E)-octadecadienoate. It carries out the reaction (5Z,8Z,11Z,14Z)-eicosatetraenoate + 2 O2 = (14R,15S)-dihydroperoxy-(5Z,8Z,10E,12E)-eicosatetraenoate. The enzyme catalyses (5Z,8Z,11Z,14Z)-eicosatetraenoate + 2 O2 = (8S,15S)-dihydroperoxy-(5Z,9E,11Z,13E)-eicosatetraenoate. It catalyses the reaction (14S,15R)-epoxy-(5Z,8Z,11Z)-eicosatrienoate + O2 = (8S)-hydroperoxy-(14S,15R)-epoxy-(5Z,9E,11Z)-eicosatrienoate. The catalysed reaction is (14S,15R)-epoxy-(5Z,8Z,11Z)-eicosatrienoate + O2 = (12S)-hydroperoxy-(14S,15R)-epoxy-(5Z,8Z,10E)-eicosatrienoate. It carries out the reaction (14R,15S)-epoxy-(5Z,8Z,11Z)-eicosatrienoate + O2 = (5S)-hydroperoxy-(14R,15S)-epoxy-(6E,8Z,11Z)-eicosatrienoate. The enzyme catalyses (14R,15S)-epoxy-(5Z,8Z,11Z)-eicosatrienoate + O2 = (12S)-hydroperoxy-(14R,15S)-epoxy-(5Z,8Z,10E)-eicosatrienoate. It catalyses the reaction (15R)-hydroperoxy-(5Z,8Z,11Z,13E)-eicosatetraenoate = 15-oxo-(5Z,8Z,11Z,13E)-eicosatetraenoate + H2O. The catalysed reaction is (15S)-hydroperoxy-(5Z,8Z,11Z,13E)-eicosatetraenoate = (14S,15S)-epoxy-(5Z,8Z,10E,12E)-eicosatetraenoate + H2O. It carries out the reaction (12S)-hydroperoxy-(5Z,8Z,10E,14Z)-eicosatetraenoate = (8S)-hydroxy-(11S,12S)-epoxy-(5Z,9E,14Z)-eicosatrienoate. The enzyme catalyses (4Z,7Z,10Z,13Z,16Z,19Z)-docosahexaenoate + O2 = (14S)-hydroperoxy-(4Z,7Z,10Z,12E,16Z,19Z)-docosahexaenoate. It catalyses the reaction (4Z,7Z,10Z,13Z,16Z,19Z)-docosahexaenoate + O2 = (17S)-hydroperoxy-(4Z,7Z,10Z,13Z,15E,19Z)-docosahexaenoate. The catalysed reaction is (7S)-hydroperoxy-(4Z,8E,10Z,13Z,16Z,19Z)-docosahexaenoate + O2 = (7S,14S)-dihydroperoxy-(4Z,8E,10Z,12E,16Z,19Z)-docosahexaenoate. It carries out the reaction (7S)-hydroperoxy-(4Z,8E,10Z,13Z,16Z,19Z)-docosahexaenoate + O2 = (7S,17S)-dihydroperoxy-(4Z,8E,10Z,13Z,15E,19Z)-docosahexaenoate. The enzyme catalyses (4Z,7Z,10Z,13Z,16Z,19Z)-docosahexaenoate + O2 = (11S)-hydroperoxy-(4Z,7Z,9E,13Z,16Z,19Z)-docosahexaenoate. It catalyses the reaction (7Z,10Z,13Z,16Z,19Z)-docosapentaenoate + O2 = 14-hydroperoxy-(7Z,10Z,12E,16Z,19Z)-docosapentaenoate. The catalysed reaction is (4Z,7Z,10Z,13Z,16Z)-docosapentaenoate + O2 = 14-hydroperoxy-(4Z,7Z,10Z,12E,16Z)-docosapentaenoate. It carries out the reaction N-(5Z,8Z,11Z,14Z)-eicosatetraenoyl-taurine + O2 = N-(12S)-hydroperoxy-(5Z,8Z,10E,14Z)-eicosatetraenoyl-taurine. The enzyme catalyses N-(5Z,8Z,11Z,14Z)-eicosatetraenoyl-gamma-aminobutanoate + O2 = N-(12S)-hydroperoxy-(5Z,8Z,10E,14Z)-eicosatetraenoyl-gamma-aminobutanoate. It catalyses the reaction N-(5Z,8Z,11Z,14Z)-eicosatetraenoyl-glycine + O2 = N-(12S)-hydroperoxy-(5Z,8Z,10E,14Z)-eicosatetraenoyl-glycine. The catalysed reaction is N-(5Z,8Z,11Z,14Z)-eicosatetraenoyl-L-alanine + O2 = N-(12S)-hydroperoxy-(5Z,8Z,10E,14Z)-eicosatetraenoyl-alanine. It carries out the reaction N-(5Z,8Z,11Z,14Z)-eicosatetraenoyl-taurine + O2 = N-(15S)-hydroperoxy-(5Z,8Z,11Z,13E)-eicosatetraenoyl-taurine. The enzyme catalyses N-(5Z,8Z,11Z,14Z)-eicosatetraenoyl-gamma-aminobutanoate + O2 = N-(15S)-hydroperoxy-(5Z,8Z,11Z,13E)-eicosatetraenoyl-gamma-aminobutanoate. It catalyses the reaction N-(5Z,8Z,11Z,14Z)-eicosatetraenoyl-glycine + O2 = N-(15S)-hydroperoxy-(5Z,8Z,11Z,13E)-eicosatetraenoyl-glycine. The catalysed reaction is N-(5Z,8Z,11Z,14Z)-eicosatetraenoyl-L-alanine + O2 = N-(15S)-hydroperoxy-(5Z,8Z,11Z,13E)-eicosatetraenoyl-alanine. Its pathway is lipid metabolism; hydroperoxy eicosatetraenoic acid biosynthesis. With respect to regulation, activity is increased by binding phosphatidylinositol phosphates, especially phosphatidylinositol 3,4-bisphosphate and phosphatidylinositol 4,5-bisphosphate. Inactivated at 37 degrees Celsius by (13S)-hydroperoxy-(9Z,11E)-octadecadienoate. In terms of biological role, non-heme iron-containing dioxygenase that catalyzes the stereo-specific peroxidation of free and esterified polyunsaturated fatty acids generating a spectrum of bioactive lipid mediators. It inserts peroxyl groups at C12 or C15 of arachidonate ((5Z,8Z,11Z,14Z)-eicosatetraenoate) producing both 12-hydroperoxyeicosatetraenoate/12-HPETE and 15-hydroperoxyeicosatetraenoate/15-HPETE. It may then act on 12-HPETE to produce hepoxilins, which may show pro-inflammatory properties. Can also peroxidize linoleate ((9Z,12Z)-octadecadienoate) to 13-hydroperoxyoctadecadienoate/13-HPODE. May participate in the sequential oxidations of DHA ((4Z,7Z,10Z,13Z,16Z,19Z)-docosahexaenoate) to generate specialized pro-resolving mediators (SPMs)like resolvin D5 ((7S,17S)-diHPDHA) and (7S,14S)-diHPDHA, that actively down-regulate the immune response and have anti-aggregation properties with platelets. Can convert epoxy fatty acids to hydroperoxy-epoxides derivatives followed by an intramolecular nucleophilic substitution leading to the formation of monocyclic endoperoxides. Plays an important role during the maintenance of self-tolerance by peroxidizing membrane-bound phosphatidylethanolamine which can then signal the sorting process for clearance of apoptotic cells during inflammation and prevent an autoimmune response. In addition to its role in the immune and inflammatory responses, this enzyme may play a role in epithelial wound healing in the cornea through production of lipoxin A4 (LXA(4)) and docosahexaenoic acid-derived neuroprotectin D1 (NPD1; 10R,17S-HDHA), both lipid autacoids exhibit anti-inflammatory and neuroprotective properties. Furthermore, it may regulate actin polymerization which is crucial for several biological processes such as the phagocytosis of apoptotic cells. It is also implicated in the generation of endogenous ligands for peroxisome proliferator activated receptor (PPAR-gamma), hence modulating macrophage development and function. It may also exert a negative effect on skeletal development by regulating bone mass through this pathway. As well as participates in ER stress and downstream inflammation in adipocytes, pancreatic islets, and liver. Finally, it is also involved in the cellular response to IL13/interleukin-13. In Homo sapiens (Human), this protein is Polyunsaturated fatty acid lipoxygenase ALOX15.